Reading from the N-terminus, the 162-residue chain is Caveolin-2 (162 aa).

Residues 1–86 (MGLETEKADV…FEVSKYVIYK (86 aa)) lie on the Cytoplasmic side of the membrane. Y19 bears the Phosphotyrosine; by SRC mark. Phosphoserine occurs at positions 20, 23, and 36. Positions 87–107 (FLTLLLAMPMAFAAGVLFATL) form an intramembrane region, helical. The Cytoplasmic segment spans residues 108–162 (SCLHIWIIMPFVKTCLMVLPSVQTIWKSVTDAVIAPLCSSVGRSFSSVSLQVSHD).

It belongs to the caveolin family. Monomer or homodimer. Interacts with CAV1; the interaction forms a stable heterooligomeric complex that is required for targeting to lipid rafts and for caveolae formation. Tyrosine phosphorylated forms do not form heterooligomers with the Tyr-19-phosphorylated form existing as a monomer or dimer. Interacts (tyrosine phosphorylated form) with the SH2 domain-containing proteins, RASA1, NCK1 and SRC. Interacts (tyrosine phosphorylated form) with INSR. Interacts (Tyr-19 phosphorylated form) with MAPK1 (phosphorylated form); the interaction, promoted by insulin, leads to nuclear location and MAPK1 activation. Interacts with STAT3; the interaction is increased on insulin-induced tyrosine phosphorylation leading to STAT activation. Post-translationally, phosphorylated on serine and tyrosine residues. CAV1 promotes phosphorylation on Ser-23 which then targets the complex to the plasma membrane, lipid rafts and caveolae. Phosphorylation on Ser-36 appears to modulate mitosis in endothelial cells. Phosphorylation on Tyr-19 is required for insulin-induced phosphorylation of MAPK1 and DNA binding of STAT3. Tyrosine phosphorylation is induced by both EGF and insulin.

The protein resides in the nucleus. The protein localises to the cytoplasm. It is found in the golgi apparatus membrane. It localises to the cell membrane. Its subcellular location is the membrane. The protein resides in the caveola. May act as a scaffolding protein within caveolar membranes. Interacts directly with G-protein alpha subunits and can functionally regulate their activity. Acts as an accessory protein in conjunction with CAV1 in targeting to lipid rafts and driving caveolae formation. The Ser-36 phosphorylated form has a role in modulating mitosis in endothelial cells. Positive regulator of cellular mitogenesis of the MAPK signaling pathway. Required for the insulin-stimulated nuclear translocation and activation of MAPK1 and STAT3, and the subsequent regulation of cell cycle progression. This chain is Caveolin-2 (CAV2), found in Canis lupus familiaris (Dog).